The sequence spans 173 residues: UPF0316 protein Amet_0954 (173 aa).

3 consecutive transmembrane segments (helical) span residues 3–23 (LVLG…MGTV), 38–58 (AIGF…LEAL), and 61–81 (PVNI…GIYI).

The protein belongs to the UPF0316 family.

The protein localises to the cell membrane. This Alkaliphilus metalliredigens (strain QYMF) protein is UPF0316 protein Amet_0954.